A 240-amino-acid polypeptide reads, in one-letter code: Ribonuclease 3 (240 aa).

The RNase III domain occupies 9-141 (VEELQKRLGV…LLAALYLDQG (133 aa)). Glu54 contacts Mg(2+). Residue Asp58 is part of the active site. Mg(2+)-binding residues include Asp127 and Glu130. Glu130 is a catalytic residue. The DRBM domain maps to 168 to 237 (DYKTALQEIV…ARKAYEKLVA (70 aa)).

This sequence belongs to the ribonuclease III family. Homodimer. The cofactor is Mg(2+).

It is found in the cytoplasm. It catalyses the reaction Endonucleolytic cleavage to 5'-phosphomonoester.. Its function is as follows. Digests double-stranded RNA. Involved in the processing of primary rRNA transcript to yield the immediate precursors to the large and small rRNAs (23S and 16S). Processes some mRNAs, and tRNAs when they are encoded in the rRNA operon. Processes pre-crRNA and tracrRNA of type II CRISPR loci if present in the organism. This Thermotoga neapolitana (strain ATCC 49049 / DSM 4359 / NBRC 107923 / NS-E) protein is Ribonuclease 3.